The primary structure comprises 498 residues: Zinc finger protein 79 (498 aa).

Positions 1 to 23 (MLEEGVLPSPGPALPQEENTGEE) are disordered. One can recognise a KRAB domain in the interval 38-109 (TFFSSVTVAF…EGEDLRSPSP (72 aa)). 11 C2H2-type zinc fingers span residues 193-215 (YACN…QKSH), 221-243 (YECS…QRIH), 249-271 (YKCS…QRTH), 277-299 (YRCS…QRIH), 305-327 (YECS…QRTH), 333-355 (YKCS…QRIH), 361-383 (YRCA…QRTH), 389-411 (YKCS…QKTH), 417-439 (YKCN…HIIH), 445-467 (YECN…QRIH), and 473-495 (YECS…QRLH).

Belongs to the krueppel C2H2-type zinc-finger protein family.

The protein localises to the nucleus. Functionally, may be involved in transcriptional regulation. This chain is Zinc finger protein 79 (ZNF79), found in Homo sapiens (Human).